Consider the following 219-residue polypeptide: ATP-dependent Clp protease proteolytic subunit (219 aa).

A disordered region spans residues 1-22 (MPVGVPKVPFLNPNPDPEPDSV). Serine 116 functions as the Nucleophile in the catalytic mechanism. The active site involves histidine 141.

The protein belongs to the peptidase S14 family. As to quaternary structure, component of the chloroplastic Clp protease core complex.

It is found in the plastid. The protein localises to the chloroplast stroma. The enzyme catalyses Hydrolysis of proteins to small peptides in the presence of ATP and magnesium. alpha-casein is the usual test substrate. In the absence of ATP, only oligopeptides shorter than five residues are hydrolyzed (such as succinyl-Leu-Tyr-|-NHMec, and Leu-Tyr-Leu-|-Tyr-Trp, in which cleavage of the -Tyr-|-Leu- and -Tyr-|-Trp bonds also occurs).. Cleaves peptides in various proteins in a process that requires ATP hydrolysis. Has a chymotrypsin-like activity. Plays a major role in the degradation of misfolded proteins. The polypeptide is ATP-dependent Clp protease proteolytic subunit (Pelargonium hortorum (Common geranium)).